Here is a 139-residue protein sequence, read N- to C-terminus: MPTINQLVRKGRKSHKGKSKSPALGYVYNTFKKEEIKTPSPQKRGVATRVGTMTPKKPNSALRKYARVRLSNLIEVTAYIPGIGHNLQEHSVVLIRGGRVKDLPGVRYHIIRGTLDTAGVEGRMQSRSKYGAKKPKNKK.

Disordered stretches follow at residues 1–22 (MPTI…SKSP) and 37–57 (KTPS…TPKK). Positions 9 to 19 (RKGRKSHKGKS) are enriched in basic residues. 3-methylthioaspartic acid is present on aspartate 102.

This sequence belongs to the universal ribosomal protein uS12 family. In terms of assembly, part of the 30S ribosomal subunit. Contacts proteins S8 and S17. May interact with IF1 in the 30S initiation complex.

Its function is as follows. With S4 and S5 plays an important role in translational accuracy. In terms of biological role, interacts with and stabilizes bases of the 16S rRNA that are involved in tRNA selection in the A site and with the mRNA backbone. Located at the interface of the 30S and 50S subunits, it traverses the body of the 30S subunit contacting proteins on the other side and probably holding the rRNA structure together. The combined cluster of proteins S8, S12 and S17 appears to hold together the shoulder and platform of the 30S subunit. The protein is Small ribosomal subunit protein uS12 of Limosilactobacillus reuteri (strain DSM 20016) (Lactobacillus reuteri).